The primary structure comprises 356 residues: MAAAKPENLSLVVHGPGDLRLENYPIPEPGPNEVLLKMHSVGICGSDVHYWQHGRIGDFVVKKPMVLGHEASGTVVKVGSLVRHLQPGDRVAIEPGAPRETDEFCKIGRYNLSPTIFFCATPPDDGNLCRFYKHNANFCYKLPDNVTFEEGALIEPLSVGIHACRRAGVTLGNKVLVCGAGPIGLVSLLAAKAMGAAQVVVTDLSASRLSKAKEVGADFILQISNESPQEIAKKVEGLLGSKPEVTIECTGVETSIQAGIYATHSGGTLVLVGLGSEMTSVPLVHAATREVDIKGVFRYCNTWPMAISMLASKSVNVKPLVTHRFPLEKALEAFETSKKGLGLKVMIKCDPNDQNP.

Cysteine 44 serves as a coordination point for Zn(2+). Tyrosine 50 lines the substrate pocket. Positions 69 and 70 each coordinate Zn(2+). Residue glutamate 155 coordinates substrate. The NAD(+) site is built by isoleucine 183, aspartate 203, and arginine 208. Residues serine 210 and serine 224 each carry the phosphoserine modification. Residues 272-274 and 296-298 contribute to the NAD(+) site; these read VGL and VFR. Arginine 298 and tyrosine 299 together coordinate substrate.

The protein belongs to the zinc-containing alcohol dehydrogenase family. As to quaternary structure, homotetramer. Requires Zn(2+) as cofactor. In terms of tissue distribution, expressed in lens.

It localises to the mitochondrion membrane. The protein resides in the cell projection. Its subcellular location is the cilium. It is found in the flagellum. The enzyme catalyses xylitol + NAD(+) = D-xylulose + NADH + H(+). The catalysed reaction is keto-D-fructose + NADH + H(+) = D-sorbitol + NAD(+). It catalyses the reaction L-iditol + NAD(+) = keto-L-sorbose + NADH + H(+). With respect to regulation, inhibited in vitro by metal chelators such as EDTA and 1,10-phenanthroline. Polyol dehydrogenase that catalyzes the reversible NAD(+)-dependent oxidation of various sugar alcohols. Is mostly active with xylitol, D-sorbitol (D-glucitol) and L-iditol as substrates, leading to the C2-oxidized products D-xylulose, D-fructose and L-sorbose, respectively. Is a key enzyme in the polyol pathway that interconverts glucose and fructose via sorbitol, which constitutes an important alternate route for glucose metabolism. May play a role in sperm motility by using sorbitol as an alternative energy source for sperm motility. Cannot use NADP(+) as the electron acceptor. Has no activity on ethanol, methanol, glycerol, galactitol and fructose 6-phosphate. The protein is Sorbitol dehydrogenase (SORD) of Bos taurus (Bovine).